The primary structure comprises 557 residues: Estrogen receptor beta (557 aa).

The tract at residues 1 to 154 (MMAAASSPEK…SSGGKADLHY (154 aa)) is modulating. 2 consecutive NR C4-type zinc fingers follow at residues 155-175 (CAVC…CEGC) and 191-215 (CPAT…LRKC). The segment at residues 155–220 (CAVCHDYASG…RLRKCYEVGM (66 aa)) is a DNA-binding region (nuclear receptor). The segment at 240–268 (LTRLSSQGKTAEPKGITGPAEGSLNKPEK) is disordered. Residues 272 to 508 (TPEQLIERIL…DLLLEMLDAH (237 aa)) form the NR LBD domain. The disordered stretch occupies residues 513-557 (SCLPHQPPQQDSKDQSEVPAPLHSSAGGPSNTWTPSSARAGGESQ). Residues 539-557 (GGPSNTWTPSSARAGGESQ) are compositionally biased toward polar residues.

This sequence belongs to the nuclear hormone receptor family. NR3 subfamily. As to quaternary structure, binds DNA as a homodimer. Can form a heterodimer with ER-alpha.

It localises to the nucleus. In terms of biological role, binds estrogens with an affinity similar to that of ER-alpha, and activates expression of reporter genes containing estrogen response elements (ERE) in an estrogen-dependent manner. The protein is Estrogen receptor beta (esr2) of Oreochromis niloticus (Nile tilapia).